The sequence spans 176 residues: MALPETLHDFLLVFLGSGLILGSLGVVLLTNPIFSAFSLGLVLVCISLFYILSNSHFVAASQLLIYVGAINILIIFAVMFMNSSEYYQDFNLWTVGDGITLIVCTSIFVSLVTTIPDTSWYGIIWTTRPNQIIEQDLISTSQQIGIHLSTDFFLPFELISIILLVALIGTIVVARQ.

The next 5 helical transmembrane spans lie at 10 to 30 (FLLVFLGSGLILGSLGVVLLT), 32 to 52 (PIFSAFSLGLVLVCISLFYIL), 63 to 83 (LLIYVGAINILIIFAVMFMNS), 92 to 112 (LWTVGDGITLIVCTSIFVSLV), and 152 to 172 (FFLPFELISIILLVALIGTIV).

This sequence belongs to the complex I subunit 6 family. NDH is composed of at least 16 different subunits, 5 of which are encoded in the nucleus.

The protein resides in the plastid. The protein localises to the chloroplast thylakoid membrane. The catalysed reaction is a plastoquinone + NADH + (n+1) H(+)(in) = a plastoquinol + NAD(+) + n H(+)(out). It catalyses the reaction a plastoquinone + NADPH + (n+1) H(+)(in) = a plastoquinol + NADP(+) + n H(+)(out). Its function is as follows. NDH shuttles electrons from NAD(P)H:plastoquinone, via FMN and iron-sulfur (Fe-S) centers, to quinones in the photosynthetic chain and possibly in a chloroplast respiratory chain. The immediate electron acceptor for the enzyme in this species is believed to be plastoquinone. Couples the redox reaction to proton translocation, and thus conserves the redox energy in a proton gradient. This chain is NAD(P)H-quinone oxidoreductase subunit 6, chloroplastic (ndhG), found in Cicer arietinum (Chickpea).